A 118-amino-acid chain; its full sequence is Large ribosomal subunit protein uL24 (118 aa).

Belongs to the universal ribosomal protein uL24 family. In terms of assembly, part of the 50S ribosomal subunit.

Functionally, one of two assembly initiator proteins, it binds directly to the 5'-end of the 23S rRNA, where it nucleates assembly of the 50S subunit. One of the proteins that surrounds the polypeptide exit tunnel on the outside of the subunit. The sequence is that of Large ribosomal subunit protein uL24 from Prochlorococcus marinus (strain SARG / CCMP1375 / SS120).